Reading from the N-terminus, the 171-residue chain is Photosystem I assembly protein Ycf3 (171 aa).

TPR repeat units lie at residues 35–68 (AFTY…EVDA), 72–105 (SYIL…NPYL), and 120–153 (GEQA…APTN).

This sequence belongs to the Ycf3 family.

Its subcellular location is the plastid. It is found in the chloroplast thylakoid membrane. Functionally, essential for the assembly of the photosystem I (PSI) complex. May act as a chaperone-like factor to guide the assembly of the PSI subunits. This is Photosystem I assembly protein Ycf3 from Nephroselmis olivacea (Green alga).